Consider the following 364-residue polypeptide: Probable transcription factor At4g00390 (364 aa).

The disordered stretch occupies residues 1–149 (MTKKLDPPTA…STKRVKKDEE (149 aa)). A compositionally biased stretch (acidic residues) spans 13–32 (SDEDDVETSEDDSSSSEEDE). Positions 39–80 (ATTAAAPAKSTAVSAATPAKSTSVSAAAPSKSTAVSAAADSD) are enriched in low complexity. Residues 81–93 (SGSESETDSDSES) show a composition bias toward acidic residues.

The protein belongs to the GeBP family.

This Arabidopsis thaliana (Mouse-ear cress) protein is Probable transcription factor At4g00390.